Here is a 263-residue protein sequence, read N- to C-terminus: Interleukin-15 receptor subunit alpha (263 aa).

The signal sequence occupies residues 1 to 32; that stretch reads MASPQLRGYGVQAIPVLLLLLLLLLLPLRVTP. Residues 33–205 are Extracellular-facing; it reads GTTCPPPVSI…ISPHSSKMTK (173 aa). A Sushi domain is found at 34–98; that stretch reads TTCPPPVSIE…WTTPSLKCIR (65 aa). Disulfide bonds link Cys36/Cys78 and Cys62/Cys96. N-linked (GlcNAc...) asparagine glycosylation is present at Asn51. Over residues 113-135 the composition is skewed to low complexity; that stretch reads TPKVTSQPESPSPSAKEPEAFSP. A disordered region spans residues 113–178; the sequence is TPKVTSQPES…HKSSRAPSLA (66 aa). Residues 136-145 show a composition bias toward polar residues; sequence KSDTAMTTET. A compositionally biased stretch (low complexity) spans 154–169; sequence TPSQTTSAGTTGTGSH. Residues 206-226 form a helical membrane-spanning segment; sequence VAISTSVLLVGAGVVMAFLAW. The Cytoplasmic segment spans residues 227–263; the sequence is YIKSRQPSQPCRVEVETMETVPMTVRASSKEDEDTGA.

In terms of assembly, the interleukin-15 receptor IL15R is a heterotrimer of IL15RA, IL2RB and IL2RG. IL15RA also self-associates. Interacts with SYK. N-glycosylated and O-glycosylated. In terms of processing, a soluble form (sIL-15RA) arises from proteolytic shedding of the membrane-anchored receptor. It also binds IL15 and thus interferes with IL15 binding to the membrane receptor. Widely expressed.

It localises to the membrane. Its subcellular location is the nucleus membrane. The protein localises to the cell surface. It is found in the secreted. The protein resides in the extracellular space. Its function is as follows. High-affinity receptor for interleukin-15. Can signal both in cis and trans where IL15R from one subset of cells presents IL15 to neighboring IL2RG-expressing cells. In neutrophils, binds and activates kinase SYK in response to IL15 stimulation. In neutrophils, required for IL15-induced phagocytosis in a SYK-dependent manner. The chain is Interleukin-15 receptor subunit alpha (Il15ra) from Mus musculus (Mouse).